The sequence spans 330 residues: D-cysteine desulfhydrase (330 aa).

Position 52 is an N6-(pyridoxal phosphate)lysine (Lys52).

This sequence belongs to the ACC deaminase/D-cysteine desulfhydrase family. In terms of assembly, homodimer. Pyridoxal 5'-phosphate serves as cofactor.

It catalyses the reaction D-cysteine + H2O = hydrogen sulfide + pyruvate + NH4(+) + H(+). In terms of biological role, catalyzes the alpha,beta-elimination reaction of D-cysteine and of several D-cysteine derivatives. It could be a defense mechanism against D-cysteine. The sequence is that of D-cysteine desulfhydrase from Yersinia pseudotuberculosis serotype O:1b (strain IP 31758).